We begin with the raw amino-acid sequence, 243 residues long: tRNA pseudouridine synthase A (243 aa).

Asp-54 functions as the Nucleophile in the catalytic mechanism. Tyr-112 is a substrate binding site.

Belongs to the tRNA pseudouridine synthase TruA family. As to quaternary structure, homodimer.

It catalyses the reaction uridine(38/39/40) in tRNA = pseudouridine(38/39/40) in tRNA. Functionally, formation of pseudouridine at positions 38, 39 and 40 in the anticodon stem and loop of transfer RNAs. The sequence is that of tRNA pseudouridine synthase A from Onion yellows phytoplasma (strain OY-M).